The chain runs to 925 residues: Coronin-7 (925 aa).

WD repeat units follow at residues 75–115 (CHSD…QALP), 124–163 (PEDLPVEVLQFHPTSDGILVSAAGTTVKVWDAAKQQPLTE), 166–205 (AHGDLVQSAVWSRDGALVGTACKDKQLRIFDPRTKPRASQ), and 209–253 (AHEN…SALA). The tract at residues 419–461 (VGDADASEGFSSPPSSLTSPSTPSSLGPSLSSTSGIGTSPSLR) is disordered. Over residues 429-460 (SSPPSSLTSPSTPSSLGPSLSSTSGIGTSPSL) the composition is skewed to low complexity. Ser-462 and Ser-465 each carry phosphoserine. Residue Lys-472 forms a Glycyl lysine isopeptide (Lys-Gly) (interchain with G-Cter in ubiquitin) linkage. WD repeat units lie at residues 542-582 (QNGA…LEEV), 592-632 (GHTE…DRLK), and 635-674 (GHQDQIFSLAWSPDGQQLATVCKDGRVRVYRPRSGPEPLQ). A Glycyl lysine isopeptide (Lys-Gly) (interchain with G-Cter in ubiquitin) cross-link involves residue Lys-680. Residues 728 to 768 (DVAPSTLLPSYDPDTGLVLLTGKGDTRVFLYELLPESPFFL) form a WD 8 repeat. Positions 858–925 (QPPDMSPVSQ…FEGVDEDEWD (68 aa)) are disordered. Low complexity predominate over residues 866-882 (SQAPREAPARRAPSSAQ). Positions 884 to 896 (LEEKSDQQKKEEL) are enriched in basic and acidic residues. Ser-915 bears the Phosphoserine mark.

This sequence belongs to the WD repeat coronin family. In terms of assembly, interacts with clathrin adapter AP1 complex. This interaction takes place at Golgi membranes and not AP1-positive endosomal membranes. Interacts (when ubiquitinated at Lys-472) with EPS15. Post-translationally, the membrane-associated form is phosphorylated on tyrosine residues. Ubiquitinated via 'Lys-33'-linked ubiquitin chains by the BCR(KLHL20) E3 ubiquitin ligase complex: 'Lys-33'-linked ubiquitination promotes interaction with EPS15 and facilitates actin polymerization at the trans-Golgi network, thereby facilitating post-Golgi trafficking. Deubiquitinated by ZRANB1/TRABID. Widely expressed. Expressed in the spleen, peripheral leukocytes, testes, brain, thymus and small intestine.

Its subcellular location is the golgi apparatus membrane. The protein resides in the golgi apparatus. The protein localises to the trans-Golgi network. It localises to the cytoplasmic vesicle. It is found in the cytoplasm. Its subcellular location is the cytosol. Functionally, F-actin regulator involved in anterograde Golgi to endosome transport: upon ubiquitination via 'Lys-33'-linked ubiquitin chains by the BCR(KLHL20) E3 ubiquitin ligase complex, interacts with EPS15 and localizes to the trans-Golgi network, where it promotes actin polymerization, thereby facilitating post-Golgi trafficking. May play a role in the maintenance of the Golgi apparatus morphology. The polypeptide is Coronin-7 (CORO7) (Homo sapiens (Human)).